A 180-amino-acid chain; its full sequence is Probable chorismate pyruvate-lyase (180 aa).

Substrate-binding residues include R73, L111, and E170.

Belongs to the UbiC family.

Its subcellular location is the cytoplasm. The enzyme catalyses chorismate = 4-hydroxybenzoate + pyruvate. The protein operates within cofactor biosynthesis; ubiquinone biosynthesis. In terms of biological role, removes the pyruvyl group from chorismate, with concomitant aromatization of the ring, to provide 4-hydroxybenzoate (4HB) for the ubiquinone pathway. In Nitrosospira multiformis (strain ATCC 25196 / NCIMB 11849 / C 71), this protein is Probable chorismate pyruvate-lyase.